A 2079-amino-acid polypeptide reads, in one-letter code: Non-reducing polyketide synthase Dhc5 (2079 aa).

The segment at 9-246 (LLFGDVTDPW…DELNIHALQH (238 aa)) is N-terminal acylcarrier protein transacylase domain (SAT). The Ketosynthase family 3 (KS3) domain maps to 366–798 (NDGIAIVGMA…GGNACLLLED (433 aa)). Active-site for beta-ketoacyl synthase activity residues include C543, H678, and H717. Residues 895–1199 (VFVFTGQGSH…MTHSLQPKTS (305 aa)) are malonyl-CoA:ACP transacylase (MAT) domain. S986 (for acyl/malonyl transferase activity) is an active-site residue. Residues 1268–1414 (EPLISTCAQY…DPTRSQVEWD (147 aa)) are N-terminal hotdog fold. One can recognise a PKS/mFAS DH domain in the interval 1268 to 1584 (EPLISTCAQY…YQELPRATWK (317 aa)). The interval 1304–1581 (MDGHKMQGIG…DIRYQELPRA (278 aa)) is product template (PT) domain. The C-terminal hotdog fold stretch occupies residues 1435 to 1584 (RGHRMQPEVF…YQELPRATWK (150 aa)). Positions 1613–1639 (RELQQPSSATVPAQETTIDEPEQQEGE) are disordered. Residues 1615–1628 (LQQPSSATVPAQET) show a composition bias toward polar residues. The region spanning 1641 to 1718 (AAGARLFNAI…DLRKEFRANE (78 aa)) is the Carrier domain. Position 1678 is an O-(pantetheine 4'-phosphoryl)serine (S1678). Positions 1721 to 1784 (VENPRFSATP…EQKRPVKIDD (64 aa)) are disordered. Residues 1727-1757 (SATPSSAEASIPSSPSSLAHPMSDSASSLSP) show a composition bias toward low complexity. Residues 1758-1784 (SDREEALPLERQSMTKREQKRPVKIDD) show a composition bias toward basic and acidic residues. The thioesterase (TE) domain stretch occupies residues 1812–2057 (ADGTGTIATY…LSVAGDHLDL (246 aa)). H2064 functions as the For thioesterase activity in the catalytic mechanism.

Its pathway is mycotoxin biosynthesis. Functionally, highly reducing polyketide synthase; part of the gene cluster that mediates the biosynthesis of 10,11-dehydrocurvularin, a prevalent fungal phytotoxin with heat shock response and immune-modulatory activities. The highly reducing polyketide synthase Dhc3 is responsible for biosynthesis up to the tetraketide stage. The non-reducing polyketide synthase Dhc5 then conducts four additional chain extension cycles, producing the unreduced part of the nascent octaketide from C-1 to C-8 in 10,11-dehydrocurvularin. The chain is Non-reducing polyketide synthase Dhc5 from Alternaria cinerariae.